Consider the following 161-residue polypeptide: ATP synthase subunit b 1 (161 aa).

The chain crosses the membrane as a helical span at residues 6–26 (EFYVALGFVIFVAILLYYGVH).

It belongs to the ATPase B chain family. In terms of assembly, F-type ATPases have 2 components, F(1) - the catalytic core - and F(0) - the membrane proton channel. F(1) has five subunits: alpha(3), beta(3), gamma(1), delta(1), epsilon(1). F(0) has three main subunits: a(1), b(2) and c(10-14). The alpha and beta chains form an alternating ring which encloses part of the gamma chain. F(1) is attached to F(0) by a central stalk formed by the gamma and epsilon chains, while a peripheral stalk is formed by the delta and b chains.

The protein resides in the cell inner membrane. Functionally, f(1)F(0) ATP synthase produces ATP from ADP in the presence of a proton or sodium gradient. F-type ATPases consist of two structural domains, F(1) containing the extramembraneous catalytic core and F(0) containing the membrane proton channel, linked together by a central stalk and a peripheral stalk. During catalysis, ATP synthesis in the catalytic domain of F(1) is coupled via a rotary mechanism of the central stalk subunits to proton translocation. Component of the F(0) channel, it forms part of the peripheral stalk, linking F(1) to F(0). This chain is ATP synthase subunit b 1, found in Beijerinckia indica subsp. indica (strain ATCC 9039 / DSM 1715 / NCIMB 8712).